Reading from the N-terminus, the 208-residue chain is MKVVEVKHPLIKHKIGLMREGDISTKRFRELATEVGSLLTYEATADFETEKVTIEGWNGPVEIDQIKGKKVTVVPILRAGLGMMDGVLEHVPSARISVVGVYRDEETLEPVPYFNKLASNIDERIALVVDPMLATGGSMIATLDLLKENGCKQFKVLVLVAAPEGIAALEKAHPDVELYTAAIDEKLNDKGYIIPGLGDAGDKIFGTK.

Residues Arg-78, Arg-103, and 130-138 (DPMLATGGS) contribute to the 5-phospho-alpha-D-ribose 1-diphosphate site. Uracil-binding positions include Ile-193 and 198–200 (GDA). Asp-199 is a binding site for 5-phospho-alpha-D-ribose 1-diphosphate.

The protein belongs to the UPRTase family. Requires Mg(2+) as cofactor.

It catalyses the reaction UMP + diphosphate = 5-phospho-alpha-D-ribose 1-diphosphate + uracil. It participates in pyrimidine metabolism; UMP biosynthesis via salvage pathway; UMP from uracil: step 1/1. Its activity is regulated as follows. Allosterically activated by GTP. Catalyzes the conversion of uracil and 5-phospho-alpha-D-ribose 1-diphosphate (PRPP) to UMP and diphosphate. In Photobacterium profundum (strain SS9), this protein is Uracil phosphoribosyltransferase.